The primary structure comprises 828 residues: Leucine--tRNA ligase (828 aa).

Residues 42-52 (PYPSGTLHVGH) carry the 'HIGH' region motif. The short motif at 582 to 586 (KMSKS) is the 'KMSKS' region element. Lysine 585 contributes to the ATP binding site.

It belongs to the class-I aminoacyl-tRNA synthetase family.

It is found in the cytoplasm. It carries out the reaction tRNA(Leu) + L-leucine + ATP = L-leucyl-tRNA(Leu) + AMP + diphosphate. The sequence is that of Leucine--tRNA ligase from Petrotoga mobilis (strain DSM 10674 / SJ95).